A 478-amino-acid chain; its full sequence is MGSGWSSEEEERQPLLGPGLGPAPGATRRGREAAAVLPAAGPSPGRVYGRRWLVLLLFSLLAFAQGLVWNTWGPIQNSARQAYSFTGWDIALLVLWGPIGFLPCFAFMWLLDKRGLRITVLLTSFLMVLGTGLRCIPVSDLTLKKRLIHGGQILNGLAGPTVMNAAPFLSTTWFSADERATATAIASMLSYLGGACAFLVGPLVVPAPNGTAPLLTAESSRDHIKDRIETVLYAEFGVVCLIFSATLAYFPPRPPLPPSVAAASQRLSYRRSFCRLLSNLRFLMIALAYAIPLGVFAGWSGVLDLILTPVHVSQVDAGWIGFWSIVGGCVVGIAMARFADFIRGMLKLILLLLFSGATLSSTWFTLTCLNSVTHLPLTTVTLYASCILLGVFLNSSVPIFFELFVETVYPVPEGITCGVVTFLSNMFMGVLLFFVTFYHTELSWFNWCLPGSCLLSLLLILCFRESYDRLYLDVVVSV.

A disordered region spans residues 1–27; the sequence is MGSGWSSEEEERQPLLGPGLGPAPGAT. The Cytoplasmic segment spans residues 1-51; sequence MGSGWSSEEEERQPLLGPGLGPAPGATRRGREAAAVLPAAGPSPGRVYGRR. A Di-leucine motif; mediates lysosomal localization motif is present at residues 15-16; sequence LL. A helical transmembrane segment spans residues 52-72; the sequence is WLVLLLFSLLAFAQGLVWNTW. Residues 73–89 lie on the Lumenal side of the membrane; it reads GPIQNSARQAYSFTGWD. A helical membrane pass occupies residues 90 to 110; sequence IALLVLWGPIGFLPCFAFMWL. Topologically, residues 111 to 117 are cytoplasmic; the sequence is LDKRGLR. Residues 118–138 form a helical membrane-spanning segment; sequence ITVLLTSFLMVLGTGLRCIPV. Topologically, residues 139 to 152 are lumenal; sequence SDLTLKKRLIHGGQ. The helical transmembrane segment at 153–173 threads the bilayer; it reads ILNGLAGPTVMNAAPFLSTTW. The Cytoplasmic portion of the chain corresponds to 174–184; that stretch reads FSADERATATA. Residues 185–205 traverse the membrane as a helical segment; sequence IASMLSYLGGACAFLVGPLVV. At 206-229 the chain is on the lumenal side; sequence PAPNGTAPLLTAESSRDHIKDRIE. N-linked (GlcNAc...) asparagine glycosylation occurs at asparagine 209. The chain crosses the membrane as a helical span at residues 230–250; that stretch reads TVLYAEFGVVCLIFSATLAYF. At 251–281 the chain is on the cytoplasmic side; the sequence is PPRPPLPPSVAAASQRLSYRRSFCRLLSNLR. A helical transmembrane segment spans residues 282 to 302; sequence FLMIALAYAIPLGVFAGWSGV. The Lumenal segment spans residues 303 to 314; it reads LDLILTPVHVSQ. The helical transmembrane segment at 315-335 threads the bilayer; sequence VDAGWIGFWSIVGGCVVGIAM. Over 336–347 the chain is Cytoplasmic; that stretch reads ARFADFIRGMLK. A helical membrane pass occupies residues 348–368; sequence LILLLLFSGATLSSTWFTLTC. Topologically, residues 369–384 are lumenal; sequence LNSVTHLPLTTVTLYA. A helical transmembrane segment spans residues 385-405; sequence SCILLGVFLNSSVPIFFELFV. Topologically, residues 406–414 are cytoplasmic; that stretch reads ETVYPVPEG. A helical transmembrane segment spans residues 415 to 435; the sequence is ITCGVVTFLSNMFMGVLLFFV. At 436–442 the chain is on the lumenal side; that stretch reads TFYHTEL. A helical membrane pass occupies residues 443–463; sequence SWFNWCLPGSCLLSLLLILCF. Residues 464 to 478 lie on the Cytoplasmic side of the membrane; the sequence is RESYDRLYLDVVVSV.

Belongs to the major facilitator superfamily. In terms of processing, cleaved in lysosomes by cathepsin L between Leu-214 and Ala-261, generating a N-glycosylated N-terminal and a non-glycosylated C-terminal fragment.

It is found in the lysosome membrane. The enzyme catalyses pyridoxine(out) + n H(+)(out) = pyridoxine(in) + n H(+)(in). Functionally, mediates H(+)-dependent pyridoxine transport. This chain is Solute carrier family 49 member 4 (Slc49a4), found in Rattus norvegicus (Rat).